Reading from the N-terminus, the 973-residue chain is Peptidyl-glycine alpha-amidating monooxygenase (973 aa).

The N-terminal stretch at 1–20 (MAGRVPSLLVLLVFPSSCLA) is a signal peptide. Residues 1–494 (MAGRVPSLLV…EGTWEPEHTG (494 aa)) are peptidylglycine alpha-hydroxylating monooxygenase. A propeptide spanning residues 21-30 (FRSPLSVFKR) is cleaved from the precursor. Topologically, residues 31–863 (FKETTRPFSN…QKLIKEPGSG (833 aa)) are intragranular. 5 cysteine pairs are disulfide-bonded: cysteine 42–cysteine 181, cysteine 76–cysteine 121, cysteine 109–cysteine 126, cysteine 222–cysteine 329, and cysteine 288–cysteine 310. Residues histidine 102 and histidine 103 each contribute to the Cu(2+) site. Cu(2+) is bound by residues histidine 167, histidine 237, histidine 239, and methionine 309. The peptidyl-alpha-hydroxyglycine alpha-amidating lyase stretch occupies residues 495–817 (DFHMEEALDW…LTEKLEHRSV (323 aa)). NHL repeat units follow at residues 498–541 (MEEA…NSFD), 567–608 (AAVL…LDPN), 617–662 (LGRS…FSPS), and 670–714 (GEES…FKTD). Valine 517 contacts Ca(2+). Arginine 530 lines the a protein pocket. Histidine 582 is a Zn(2+) binding site. Ca(2+) is bound at residue leucine 584. A disulfide bond links cysteine 631 and cysteine 652. Position 651 (tyrosine 651) interacts with a protein. Residue histidine 687 participates in Zn(2+) binding. Cysteine 699 and cysteine 710 form a disulfide bridge. Arginine 703 lines the a protein pocket. Residue asparagine 762 is glycosylated (N-linked (GlcNAc...) asparagine). One copy of the NHL 5 repeat lies at 766 to 809 (GEIIDIFKPVRKHFDMPHDIVASEDGTVYIGDAHTNTVWKFTLT). Histidine 783 contacts Zn(2+). Aspartate 784 provides a ligand contact to Ca(2+). A helical membrane pass occupies residues 864 to 887 (VPVVLITTLLVIPVVVLLAIAIFI). Sulfotyrosine occurs at positions 875 and 893. Residues 888–973 (RWKKSRAFGD…PLPALAPSSS (86 aa)) are Cytoplasmic-facing. Serine 918, serine 929, and serine 942 each carry phosphoserine. The interval 925-942 (NFFASRKGYSRKGFDRLS) is interaction with RASSF9. The tract at residues 937 to 973 (GFDRLSTEGSDQEKEDDGSESEEEYSAPLPALAPSSS) is disordered. Threonine 943 carries the post-translational modification Phosphothreonine. Phosphoserine; by UHMK1; in vitro is present on serine 946. Residues 949–961 (EKEDDGSESEEEY) show a composition bias toward acidic residues. Serine 957 carries the post-translational modification Phosphoserine. A compositionally biased stretch (low complexity) spans 962–973 (SAPLPALAPSSS).

This sequence in the C-terminal section; belongs to the peptidyl-alpha-hydroxyglycine alpha-amidating lyase family. It in the N-terminal section; belongs to the copper type II ascorbate-dependent monooxygenase family. In terms of assembly, monomer. Interacts with RASSF9. Zn(2+) serves as cofactor. The cofactor is Cu(2+).

The protein localises to the cytoplasmic vesicle. It is found in the secretory vesicle membrane. It localises to the membrane. The protein resides in the secreted. The enzyme catalyses a [peptide]-C-terminal glycine + 2 L-ascorbate + O2 = a [peptide]-C-terminal (2S)-2-hydroxyglycine + 2 monodehydro-L-ascorbate radical + H2O. It catalyses the reaction a [peptide]-C-terminal (2S)-2-hydroxyglycine = a [peptide]-C-terminal amide + glyoxylate. It carries out the reaction N-dodecanoylglycine + 2 L-ascorbate + O2 = N-dodecanoyl-(2S)-hydroxyglycine + 2 monodehydro-L-ascorbate radical + H2O. The catalysed reaction is N-dodecanoyl-(2S)-hydroxyglycine = dodecanamide + glyoxylate. The enzyme catalyses N-(9Z,12Z,15Z)-octadecatrienoylglycine + 2 L-ascorbate + O2 = N-(9Z,12Z,15Z)-octadecatrienoyl-(2S)-hydroxyglycine + 2 monodehydro-L-ascorbate radical + H2O. It catalyses the reaction N-(9Z,12Z,15Z)-octadecatrienoyl-(2S)-hydroxyglycine = (9Z,12Z,15Z)-octadecatrienamide + glyoxylate. It carries out the reaction N-(9Z-octadecenoyl)glycine + 2 L-ascorbate + O2 = N-(9Z-octadecenoyl)-(2S)-hydroxyglycine + 2 monodehydro-L-ascorbate radical + H2O. The catalysed reaction is N-(9Z-octadecenoyl)-(2S)-hydroxyglycine = (9Z)-octadecenamide + glyoxylate. The enzyme catalyses N-tetradecanoylglycine + 2 L-ascorbate + O2 = N-tetradecanoyl-(2S)-hydroxyglycine + 2 monodehydro-L-ascorbate radical + H2O. It catalyses the reaction N-tetradecanoyl-(2S)-hydroxyglycine = tetradecamide + glyoxylate. It carries out the reaction N-decanoylglycine + 2 L-ascorbate + O2 = N-decanoyl-(2S)-hydroxyglycine + 2 monodehydro-L-ascorbate radical + H2O. The catalysed reaction is N-decanoyl-(2S)-hydroxyglycine = decanamide + glyoxylate. The enzyme catalyses N-octanoylglycine + 2 L-ascorbate + O2 = N-octanoyl-(2S)-hydroxyglycine + 2 monodehydro-L-ascorbate radical + H2O. It catalyses the reaction N-octanoyl-(2S)-hydroxyglycine = octanamide + glyoxylate. With respect to regulation, PAM activity is inhibited by EDTA, phenylglyoxal and diethyl pyrocarbonate. PAL activity is stimulated by cadmium and inhibited by mercury. In terms of biological role, bifunctional enzyme that catalyzes amidation of the C-terminus of proteins. Alpha-amidation is present at the C-terminus of many endocrine hormones and neuropeptides and is required for their activity. C-terminal amidation also takes place in response to protein fragmentation triggered by oxidative stress, promoting degradation of amidated protein fragments by the proteasome. Alpha-amidation involves two sequential reactions, both of which are catalyzed by separate catalytic domains of the enzyme. The first step, catalyzed by peptidyl alpha-hydroxylating monooxygenase (PHM) domain, is the copper-, ascorbate-, and O2- dependent stereospecific hydroxylation (with S stereochemistry) at the alpha-carbon (C-alpha) of the C-terminal glycine of the peptidylglycine substrate. The second step, catalyzed by the peptidylglycine amidoglycolate lyase (PAL) domain, is the zinc-dependent cleavage of the N-C-alpha bond, producing the alpha-amidated peptide and glyoxylate. Similarly, catalyzes the two-step conversion of an N-fatty acylglycine to a primary fatty acid amide and glyoxylate. This chain is Peptidyl-glycine alpha-amidating monooxygenase, found in Homo sapiens (Human).